A 455-amino-acid polypeptide reads, in one-letter code: Serine--tRNA ligase (455 aa).

252-254 (TAE) is an L-serine binding site. ATP is bound by residues 283 to 285 (RKE) and Val299. Glu306 lines the L-serine pocket. 370 to 373 (EVVS) is an ATP binding site. Thr406 is a binding site for L-serine.

The protein belongs to the class-II aminoacyl-tRNA synthetase family. Type-1 seryl-tRNA synthetase subfamily. As to quaternary structure, homodimer. The tRNA molecule binds across the dimer.

Its subcellular location is the cytoplasm. It carries out the reaction tRNA(Ser) + L-serine + ATP = L-seryl-tRNA(Ser) + AMP + diphosphate + H(+). The enzyme catalyses tRNA(Sec) + L-serine + ATP = L-seryl-tRNA(Sec) + AMP + diphosphate + H(+). It functions in the pathway aminoacyl-tRNA biosynthesis; selenocysteinyl-tRNA(Sec) biosynthesis; L-seryl-tRNA(Sec) from L-serine and tRNA(Sec): step 1/1. Catalyzes the attachment of serine to tRNA(Ser). Is also able to aminoacylate tRNA(Sec) with serine, to form the misacylated tRNA L-seryl-tRNA(Sec), which will be further converted into selenocysteinyl-tRNA(Sec). This Pyrococcus abyssi (strain GE5 / Orsay) protein is Serine--tRNA ligase.